The chain runs to 111 residues: 2Fe-2S ferredoxin (111 aa).

One can recognise a 2Fe-2S ferredoxin-type domain in the interval 2–104; the sequence is PKIVILPHQD…DLVVEIPRYT (103 aa). [2Fe-2S] cluster-binding residues include Cys42, Cys48, Cys51, and Cys87.

Belongs to the adrenodoxin/putidaredoxin family. [2Fe-2S] cluster serves as cofactor.

Its function is as follows. Ferredoxin are iron-sulfur proteins that transfer electrons in a wide variety of metabolic reactions. Although the function of this ferredoxin is unknown it is probable that it has a role as a cellular electron transfer protein. Involved in the in vivo assembly of the Fe-S clusters in a wide variety of iron-sulfur proteins. The chain is 2Fe-2S ferredoxin (fdx) from Escherichia coli O157:H7.